The primary structure comprises 22 residues: Brevinin-2LTa (22 aa).

Expressed by the skin glands.

The protein resides in the secreted. Functionally, has antibacterial activity. This chain is Brevinin-2LTa, found in Rana latastei (Italian agile frog).